Reading from the N-terminus, the 604-residue chain is NADH-ubiquinone oxidoreductase chain 5 (604 aa).

16 helical membrane passes run 2–22 (FSSLMLVSLLVLTLPIMLSIF), 41–61 (AFITSLIPTMMFIHSGQETII), 85–105 (MIFVPVALFVTWSIMEFSLWY), 115–135 (FFKYLLTFLITMMILVTANNL), 138–158 (LFIGWEGVGIMSFLLIGWWYG), 169–189 (AILYNRIGDIGFIMAMAWFLF), 209–231 (LPLLGLLLAATGKSAQFGLHPWL), 239–259 (TPVSALLHSSTMVVAGVFLLI), 271–291 (IQSLTLCLGAITTLFTAICAL), 299–318 (IIAFSTSSQLGLMIVTIGIN), 323–345 (AFLHICTHAFFKAMLFMCSGSII), 364–384 (MPFTTTSLIIGSLALTGIPFL), 411–431 (LIATSLTAVYSTRIIFFALLG), 455–475 (LLIGSIFAGFFISNNIYPTTV), 486–506 (LTALAVTILGFTLALELSLMT), and 582–602 (IKLYFLSFLITLTLSMLLFNL).

This sequence belongs to the complex I subunit 5 family. In terms of assembly, core subunit of respiratory chain NADH dehydrogenase (Complex I) which is composed of 45 different subunits.

It localises to the mitochondrion inner membrane. It catalyses the reaction a ubiquinone + NADH + 5 H(+)(in) = a ubiquinol + NAD(+) + 4 H(+)(out). Core subunit of the mitochondrial membrane respiratory chain NADH dehydrogenase (Complex I) which catalyzes electron transfer from NADH through the respiratory chain, using ubiquinone as an electron acceptor. Essential for the catalytic activity and assembly of complex I. The protein is NADH-ubiquinone oxidoreductase chain 5 (MT-ND5) of Equus caballus (Horse).